The following is a 196-amino-acid chain: dTTP/UTP pyrophosphatase (196 aa).

D72 acts as the Proton acceptor in catalysis.

Belongs to the Maf family. YhdE subfamily. It depends on a divalent metal cation as a cofactor.

It is found in the cytoplasm. It catalyses the reaction dTTP + H2O = dTMP + diphosphate + H(+). The catalysed reaction is UTP + H2O = UMP + diphosphate + H(+). Its function is as follows. Nucleoside triphosphate pyrophosphatase that hydrolyzes dTTP and UTP. May have a dual role in cell division arrest and in preventing the incorporation of modified nucleotides into cellular nucleic acids. In Chlamydia felis (strain Fe/C-56) (Chlamydophila felis), this protein is dTTP/UTP pyrophosphatase.